Consider the following 412-residue polypeptide: Serine hydroxymethyltransferase (412 aa).

(6S)-5,6,7,8-tetrahydrofolate-binding positions include L117 and 121-123; that span reads GHL. At K226 the chain carries N6-(pyridoxal phosphate)lysine.

The protein belongs to the SHMT family. In terms of assembly, homodimer. Requires pyridoxal 5'-phosphate as cofactor.

The protein resides in the cytoplasm. The enzyme catalyses (6R)-5,10-methylene-5,6,7,8-tetrahydrofolate + glycine + H2O = (6S)-5,6,7,8-tetrahydrofolate + L-serine. The protein operates within one-carbon metabolism; tetrahydrofolate interconversion. It functions in the pathway amino-acid biosynthesis; glycine biosynthesis; glycine from L-serine: step 1/1. In terms of biological role, catalyzes the reversible interconversion of serine and glycine with tetrahydrofolate (THF) serving as the one-carbon carrier. This reaction serves as the major source of one-carbon groups required for the biosynthesis of purines, thymidylate, methionine, and other important biomolecules. Also exhibits THF-independent aldolase activity toward beta-hydroxyamino acids, producing glycine and aldehydes, via a retro-aldol mechanism. The protein is Serine hydroxymethyltransferase of Staphylococcus aureus (strain MW2).